The chain runs to 399 residues: Putative 8-amino-7-oxononanoate synthase (399 aa).

Arginine 23 is a binding site for substrate. 110 to 111 (GY) contributes to the pyridoxal 5'-phosphate binding site. Substrate is bound at residue histidine 135. Pyridoxal 5'-phosphate is bound by residues serine 183, 208–211 (DEAH), and 239–242 (TLSK). The residue at position 242 (lysine 242) is an N6-(pyridoxal phosphate)lysine. Threonine 364 contributes to the substrate binding site.

It belongs to the class-II pyridoxal-phosphate-dependent aminotransferase family. BioF subfamily. Homodimer. Requires pyridoxal 5'-phosphate as cofactor.

The catalysed reaction is 6-carboxyhexanoyl-[ACP] + L-alanine + H(+) = (8S)-8-amino-7-oxononanoate + holo-[ACP] + CO2. It functions in the pathway cofactor biosynthesis; biotin biosynthesis. Its function is as follows. Catalyzes the decarboxylative condensation of pimeloyl-[acyl-carrier protein] and L-alanine to produce 8-amino-7-oxononanoate (AON), [acyl-carrier protein], and carbon dioxide. This is Putative 8-amino-7-oxononanoate synthase (bioF) from Cyanothece sp. (strain PCC 7425 / ATCC 29141).